Consider the following 350-residue polypeptide: tRNA U34 carboxymethyltransferase (350 aa).

Carboxy-S-adenosyl-L-methionine-binding positions include Lys101, Trp125, Lys130, Gly150, 172-174 (DPS), 208-209 (LE), Met224, Tyr228, and Arg343.

This sequence belongs to the class I-like SAM-binding methyltransferase superfamily. CmoB family. In terms of assembly, homotetramer.

It catalyses the reaction carboxy-S-adenosyl-L-methionine + 5-hydroxyuridine(34) in tRNA = 5-carboxymethoxyuridine(34) in tRNA + S-adenosyl-L-homocysteine + H(+). In terms of biological role, catalyzes carboxymethyl transfer from carboxy-S-adenosyl-L-methionine (Cx-SAM) to 5-hydroxyuridine (ho5U) to form 5-carboxymethoxyuridine (cmo5U) at position 34 in tRNAs. The protein is tRNA U34 carboxymethyltransferase of Psychrobacter arcticus (strain DSM 17307 / VKM B-2377 / 273-4).